The chain runs to 142 residues: MAKKVTGYLKLQVPAGAANPSPPIGPALGQRGLNIMEFCKAFNAQTQKEEKNTPIPVVITIYADRSFTFEMKTPPMSFFLKQAANVKSGSKLPGRDVAGKVTSAQVREIAERKMKDLNCDSIEAAMKMVEGSARSMGLQVAG.

This sequence belongs to the universal ribosomal protein uL11 family. As to quaternary structure, part of the ribosomal stalk of the 50S ribosomal subunit. Interacts with L10 and the large rRNA to form the base of the stalk. L10 forms an elongated spine to which L12 dimers bind in a sequential fashion forming a multimeric L10(L12)X complex. In terms of processing, one or more lysine residues are methylated.

In terms of biological role, forms part of the ribosomal stalk which helps the ribosome interact with GTP-bound translation factors. This Rhodopseudomonas palustris (strain BisB18) protein is Large ribosomal subunit protein uL11.